A 415-amino-acid chain; its full sequence is Glutamyl-tRNA reductase (415 aa).

Substrate-binding positions include threonine 49 to arginine 52, serine 104, glutamate 109 to glutamine 111, and glutamine 115. The Nucleophile role is filled by cysteine 50. Position 184–189 (glycine 184–isoleucine 189) interacts with NADP(+).

This sequence belongs to the glutamyl-tRNA reductase family. Homodimer.

It catalyses the reaction (S)-4-amino-5-oxopentanoate + tRNA(Glu) + NADP(+) = L-glutamyl-tRNA(Glu) + NADPH + H(+). Its pathway is porphyrin-containing compound metabolism; protoporphyrin-IX biosynthesis; 5-aminolevulinate from L-glutamyl-tRNA(Glu): step 1/2. Functionally, catalyzes the NADPH-dependent reduction of glutamyl-tRNA(Glu) to glutamate 1-semialdehyde (GSA). The chain is Glutamyl-tRNA reductase from Neisseria meningitidis serogroup C (strain 053442).